We begin with the raw amino-acid sequence, 447 residues long: Argininosuccinate synthase (447 aa).

Residues 12–20 (AYSGGLDTS) and Ala39 each bind ATP. L-citrulline is bound by residues Tyr92 and Ser97. Gly122 contributes to the ATP binding site. L-aspartate contacts are provided by Thr124, Asn128, and Asp129. Residue Asn128 participates in L-citrulline binding. 5 residues coordinate L-citrulline: Arg132, Ser182, Ser191, Glu267, and Tyr279.

The protein belongs to the argininosuccinate synthase family. Type 1 subfamily. As to quaternary structure, homotetramer.

It is found in the cytoplasm. The enzyme catalyses L-citrulline + L-aspartate + ATP = 2-(N(omega)-L-arginino)succinate + AMP + diphosphate + H(+). It functions in the pathway amino-acid biosynthesis; L-arginine biosynthesis; L-arginine from L-ornithine and carbamoyl phosphate: step 2/3. The chain is Argininosuccinate synthase from Sulfurovum sp. (strain NBC37-1).